Here is a 182-residue protein sequence, read N- to C-terminus: Ribulose bisphosphate carboxylase small subunit, chloroplastic 3 (182 aa).

A chloroplast-targeting transit peptide spans 1–41 (MASIMMNKSVVLSKECAKPLASPKVTLNKRGFATTIATKNR).

This sequence belongs to the RuBisCO small chain family. Heterohexadecamer of 8 large and 8 small subunits.

It is found in the plastid. The protein resides in the chloroplast. Its function is as follows. RuBisCO catalyzes two reactions: the carboxylation of D-ribulose 1,5-bisphosphate, the primary event in carbon dioxide fixation, as well as the oxidative fragmentation of the pentose substrate. Both reactions occur simultaneously and in competition at the same active site. Although the small subunit is not catalytic it is essential for maximal activity. The chain is Ribulose bisphosphate carboxylase small subunit, chloroplastic 3 from Acetabularia acetabulum (Mermaid's wine glass).